The following is a 601-amino-acid chain: Elongation factor 4 (601 aa).

Residues N6–R188 enclose the tr-type G domain. Residues D18–T23 and N135–D138 contribute to the GTP site.

It belongs to the TRAFAC class translation factor GTPase superfamily. Classic translation factor GTPase family. LepA subfamily.

It localises to the cell inner membrane. The enzyme catalyses GTP + H2O = GDP + phosphate + H(+). In terms of biological role, required for accurate and efficient protein synthesis under certain stress conditions. May act as a fidelity factor of the translation reaction, by catalyzing a one-codon backward translocation of tRNAs on improperly translocated ribosomes. Back-translocation proceeds from a post-translocation (POST) complex to a pre-translocation (PRE) complex, thus giving elongation factor G a second chance to translocate the tRNAs correctly. Binds to ribosomes in a GTP-dependent manner. This chain is Elongation factor 4, found in Bartonella henselae (strain ATCC 49882 / DSM 28221 / CCUG 30454 / Houston 1) (Rochalimaea henselae).